Reading from the N-terminus, the 159-residue chain is Dihydrofolate reductase (159 aa).

Positions 2-157 constitute a DHFR domain; sequence TLSILVAHDL…IPHTFLHLIR (156 aa). 6–8 contacts substrate; that stretch reads LVA. Residues 7–8 and 15–20 contribute to the NADP(+) site; these read VA and IGFENQ. D28 provides a ligand contact to substrate. 44-47 is a binding site for NADP(+); the sequence is GRKT. R58 contacts substrate. Residues 63–66 and 93–98 contribute to the NADP(+) site; these read LTSD and FGGQTL. T112 is a binding site for substrate.

This sequence belongs to the dihydrofolate reductase family.

The enzyme catalyses (6S)-5,6,7,8-tetrahydrofolate + NADP(+) = 7,8-dihydrofolate + NADPH + H(+). It participates in cofactor biosynthesis; tetrahydrofolate biosynthesis; 5,6,7,8-tetrahydrofolate from 7,8-dihydrofolate: step 1/1. Its function is as follows. Key enzyme in folate metabolism. Catalyzes an essential reaction for de novo glycine and purine synthesis, and for DNA precursor synthesis. The polypeptide is Dihydrofolate reductase (folA) (Staphylococcus aureus (strain COL)).